Consider the following 454-residue polypeptide: Methylenetetrahydrofolate--tRNA-(uracil-5-)-methyltransferase TrmFO (454 aa).

9-14 (GAGLAG) is an FAD binding site. Residues 432–454 (LERVSPPSRETGEPTGAEQVDLA) form a disordered region.

This sequence belongs to the MnmG family. TrmFO subfamily. FAD serves as cofactor.

It localises to the cytoplasm. The catalysed reaction is uridine(54) in tRNA + (6R)-5,10-methylene-5,6,7,8-tetrahydrofolate + NADH + H(+) = 5-methyluridine(54) in tRNA + (6S)-5,6,7,8-tetrahydrofolate + NAD(+). It catalyses the reaction uridine(54) in tRNA + (6R)-5,10-methylene-5,6,7,8-tetrahydrofolate + NADPH + H(+) = 5-methyluridine(54) in tRNA + (6S)-5,6,7,8-tetrahydrofolate + NADP(+). Catalyzes the folate-dependent formation of 5-methyl-uridine at position 54 (M-5-U54) in all tRNAs. The chain is Methylenetetrahydrofolate--tRNA-(uracil-5-)-methyltransferase TrmFO from Pelobacter propionicus (strain DSM 2379 / NBRC 103807 / OttBd1).